The following is a 333-amino-acid chain: Geranylgeranyl pyrophosphate synthase olcC (333 aa).

Lysine 61, arginine 64, and histidine 93 together coordinate isopentenyl diphosphate. The Mg(2+) site is built by aspartate 100 and aspartate 104. Dimethylallyl diphosphate is bound at residue arginine 109. Arginine 110 is a binding site for isopentenyl diphosphate. Dimethylallyl diphosphate contacts are provided by lysine 187, threonine 188, and glutamine 221. Aspartate 224 is a binding site for Mg(2+). The dimethylallyl diphosphate site is built by asparagine 228, lysine 238, and lysine 248.

It belongs to the FPP/GGPP synthase family. The cofactor is Mg(2+).

It carries out the reaction isopentenyl diphosphate + dimethylallyl diphosphate = (2E)-geranyl diphosphate + diphosphate. The catalysed reaction is isopentenyl diphosphate + (2E)-geranyl diphosphate = (2E,6E)-farnesyl diphosphate + diphosphate. It catalyses the reaction isopentenyl diphosphate + (2E,6E)-farnesyl diphosphate = (2E,6E,10E)-geranylgeranyl diphosphate + diphosphate. It participates in secondary metabolite biosynthesis; terpenoid biosynthesis. In terms of biological role, geranylgeranyl pyrophosphate synthase; part of the gene cluster that mediates the biosynthesis of 15-deoxyoxalicine B. The first step of the pathway is the synthesis of nicotinyl-CoA from nicotinic acid by the nicotinic acid-CoA ligase olcI. Nicotinyl-CoA is then a substrate of polyketide synthase olcA to produce 4-hydroxy-6-(3-pyridinyl)-2H-pyran-2-one (HPPO) which is further prenylated by the polyprenyl transferase olcH to yield geranylgeranyl-HPPO. Geranylgeranyl pyrophosphate is provided by the cluster-specific geranylgeranyl pyrophosphate synthase olcC. The FAD-dependent monooxygenase olcE catalyzes the epoxidation of geranylgeranyl-HPPO and the terpene cyclase olcD catalyzes the cyclization of the terpenoid component, resulting in the formation of the tricyclic terpene moiety seen in predecaturin E. The cytochrome P450 monooxygenase then catalyzes the allylic oxidation of predecaturin E, which is followed by spirocylization with concomitant loss of one molecule of water to form decaturin E. Decaturin E is the substrate of the cytochrome P450 monooxygenase olcJ which hydroxylates it at the C-29 position to form decaturin F. The short-chain dehydrogenase/reductase olcF may catalyze the oxidation of decaturin F to generate the 29-hydroxyl-27-one intermediate, and subsequent hemiacetal formation probably leads to the formation of decaturin C. The dioxygenase olcK may be a peroxisomal enzyme that catalyzes the hydroxylation of decaturin C into decaturin A once decaturin C is shuttled into the peroxisome by the MFS transporter olcL. Finally the cytochrome P450 monooxygenase olcB catalyzes the oxidative rearrangement to yield 15-deoxyoxalicine B. In the absence of olcJ, decaturin E may be shunted to a pathway in which it is oxidized to a ketone, possibly by olcF, to form decaturin D, which undergoes further allylic oxidation to yield decaturin G. Moreover, in the absence of oclK or oclL, oclB can convert decaturin C into 15-deoxyoxalicine A. The protein is Geranylgeranyl pyrophosphate synthase olcC of Penicillium canescens.